The sequence spans 303 residues: Protease HtpX homolog (303 aa).

The next 2 membrane-spanning stretches (helical) occupy residues 19–39 (IIIF…VSYF) and 41–61 (LGEF…YYAY). H146 serves as a coordination point for Zn(2+). The active site involves E147. H150 provides a ligand contact to Zn(2+). 2 consecutive transmembrane segments (helical) span residues 156 to 176 (VRLQ…GDSL) and 192 to 212 (NILG…ATLL). E221 is a binding site for Zn(2+).

This sequence belongs to the peptidase M48B family. It depends on Zn(2+) as a cofactor.

Its subcellular location is the cell inner membrane. In Dictyoglomus thermophilum (strain ATCC 35947 / DSM 3960 / H-6-12), this protein is Protease HtpX homolog.